A 303-amino-acid polypeptide reads, in one-letter code: Mitochondrial carrier homolog 2 (303 aa).

N-acetylalanine is present on Ala2. Residues Ala2–Thr15 lie on the Mitochondrial intermembrane side of the membrane. Solcar repeat units lie at residues Ala2 to Ser98 and Asp118 to Tyr206. The helical transmembrane segment at Ile16 to Pro36 threads the bilayer. Residues Pro37–Arg77 are Cytoplasmic-facing. Residues Leu78–Leu92 traverse the membrane as a helical segment. Residues Gln93–Thr135 lie on the Mitochondrial intermembrane side of the membrane. Residues Leu136–Glu156 traverse the membrane as a helical segment. Over Ser157 to Ala180 the chain is Cytoplasmic. A helical membrane pass occupies residues Gly181–Leu199. Over Ala200 to Ser231 the chain is Mitochondrial intermembrane. A helical membrane pass occupies residues Met232 to Ala252. Over Gly253–Arg280 the chain is Cytoplasmic. The helical transmembrane segment at Gly281–Ile303 threads the bilayer.

It belongs to the mitochondrial carrier (TC 2.A.29) family. Interacts with p15BID.

It is found in the mitochondrion outer membrane. Functionally, protein insertase that mediates insertion of transmembrane proteins into the mitochondrial outer membrane. Catalyzes insertion of proteins with alpha-helical transmembrane regions, such as signal-anchored, tail-anchored and multi-pass membrane proteins. Does not mediate insertion of beta-barrel transmembrane proteins. Also acts as a receptor for the truncated form of pro-apoptotic BH3-interacting domain death agonist (p15 BID) and has therefore a critical function in apoptosis. Regulates the quiescence/cycling of hematopoietic stem cells (HSCs). Acts as a regulator of mitochondrial fusion, essential for the naive-to-primed interconversion of embryonic stem cells (ESCs). Acts as a regulator of lipid homeostasis and has a regulatory role in adipocyte differentiation and biology. The polypeptide is Mitochondrial carrier homolog 2 (Homo sapiens (Human)).